Consider the following 682-residue polypeptide: Potassium-transporting ATPase ATP-binding subunit (682 aa).

Helical transmembrane passes span 34-54 (PVMFVVWAGSVLTTLLTLAMV), 58-78 (IAGSALFTGIISLWLWFTVLF), 219-239 (IALTILLIALTIVFLLATATL), and 254-274 (VLVALLVCLIPTTIGGLLSAI). D307 acts as the 4-aspartylphosphate intermediate in catalysis. ATP is bound by residues D344, E348, 377–384 (FTAQSRMS), and K395. Positions 518 and 522 each coordinate Mg(2+). The next 3 helical transmembrane spans lie at 588 to 608 (FAIIPAAFAATYPQLNALNVM), 616 to 636 (AILSAVIFNALIIIFLIPLAL), and 662 to 682 (LVVPFIGIKVIDVLLTLLGLA).

Belongs to the cation transport ATPase (P-type) (TC 3.A.3) family. Type IA subfamily. The system is composed of three essential subunits: KdpA, KdpB and KdpC.

The protein localises to the cell inner membrane. The enzyme catalyses K(+)(out) + ATP + H2O = K(+)(in) + ADP + phosphate + H(+). In terms of biological role, part of the high-affinity ATP-driven potassium transport (or Kdp) system, which catalyzes the hydrolysis of ATP coupled with the electrogenic transport of potassium into the cytoplasm. This subunit is responsible for energy coupling to the transport system and for the release of the potassium ions to the cytoplasm. This is Potassium-transporting ATPase ATP-binding subunit from Salmonella newport (strain SL254).